The chain runs to 76 residues: uncharacterized protein (76 aa).

The signal sequence occupies residues 1–15 (MYLPLLLFCVISCYG).

This is an uncharacterized protein from Magallana gigas (Pacific oyster).